The primary structure comprises 306 residues: Large ribosomal subunit protein uL18 (306 aa).

This sequence belongs to the universal ribosomal protein uL18 family. Component of the large ribosomal subunit (LSU).

It is found in the cytoplasm. It localises to the nucleus. Component of the ribosome, a large ribonucleoprotein complex responsible for the synthesis of proteins in the cell. The small ribosomal subunit (SSU) binds messenger RNAs (mRNAs) and translates the encoded message by selecting cognate aminoacyl-transfer RNA (tRNA) molecules. The large subunit (LSU) contains the ribosomal catalytic site termed the peptidyl transferase center (PTC), which catalyzes the formation of peptide bonds, thereby polymerizing the amino acids delivered by tRNAs into a polypeptide chain. The nascent polypeptides leave the ribosome through a tunnel in the LSU and interact with protein factors that function in enzymatic processing, targeting, and the membrane insertion of nascent chains at the exit of the ribosomal tunnel. The sequence is that of Large ribosomal subunit protein uL18 (RPL5) from Theileria annulata.